We begin with the raw amino-acid sequence, 192 residues long: E3 ubiquitin-protein ligase RNF185 (192 aa).

A compositionally biased stretch (low complexity) spans 1 to 27; that stretch reads MASKGPSASASPENSSAGGPSGSSNGA. A disordered region spans residues 1–30; it reads MASKGPSASASPENSSAGGPSGSSNGAGES. At 1–130 the chain is on the cytoplasmic side; it reads MASKGPSASA…GGFQGFGFGD (130 aa). The tract at residues 29–80 is required for ubiquitin ligase activity and protection against ER stress-induced cell death; the sequence is ESGGQDSTFECNICLDTAKDAVISLCGHLFCWPCLHQWLETRPNRQVCPVCK. The RING-type zinc-finger motif lies at 39 to 80; sequence CNICLDTAKDAVISLCGHLFCWPCLHQWLETRPNRQVCPVCK. The disordered stretch occupies residues 90–123; sequence PLYGRGSTGQQDPREKTPPRPQGQRPEPENRGGF. The chain crosses the membrane as a helical span at residues 131-151; the sequence is GGFQMSFGIGAFPFGIFATAF. The Mitochondrial intermembrane segment spans residues 152–171; the sequence is NINDGRPPPAVPGTPQYVDE. A helical transmembrane segment spans residues 172–192; it reads QFLSRLFLFVALVIMFWLLIA.

Interacts with ATG5 and BNIP1. As to expression, ubiquitously expressed.

It localises to the mitochondrion outer membrane. The protein resides in the endoplasmic reticulum membrane. It catalyses the reaction S-ubiquitinyl-[E2 ubiquitin-conjugating enzyme]-L-cysteine + [acceptor protein]-L-lysine = [E2 ubiquitin-conjugating enzyme]-L-cysteine + N(6)-ubiquitinyl-[acceptor protein]-L-lysine.. Its pathway is protein modification; protein ubiquitination. Functionally, E3 ubiquitin-protein ligase that regulates selective mitochondrial autophagy by mediating 'Lys-63'-linked polyubiquitination of BNIP1. Acts in the endoplasmic reticulum (ER)-associated degradation (ERAD) pathway, which targets misfolded proteins that accumulate in the endoplasmic reticulum (ER) for ubiquitination and subsequent proteasome-mediated degradation. Protects cells from ER stress-induced apoptosis. Responsible for the cotranslational ubiquitination and degradation of CFTR in the ERAD pathway. Also acts as a regulator of the innate antiviral response by catalyzing 'Lys-27'-linked polyubiquitination of CGAS at 'Lys-173' and 'Lys-384', thereby promoting CGAS cyclic GMP-AMP synthase activity. Preferentially associates with the E2 enzymes UBE2J1 and UBE2J2. The chain is E3 ubiquitin-protein ligase RNF185 from Homo sapiens (Human).